The following is a 204-amino-acid chain: Cytochrome P450 monooxygenase PC-23 (204 aa).

A heme-binding site is contributed by Cys-138.

The protein belongs to the cytochrome P450 family. Heme serves as cofactor.

It functions in the pathway secondary metabolite biosynthesis. In terms of biological role, cytochrome P450 monooxygenase; part of the gene cluster that mediates the biosynthesis of the indole diterpenes penitrems. The geranylgeranyl diphosphate (GGPP) synthase penG catalyzes the first step in penitrem biosynthesis via conversion of farnesyl pyrophosphate and isopentyl pyrophosphate into geranylgeranyl pyrophosphate (GGPP). Condensation of indole-3-glycerol phosphate with GGPP by the prenyl transferase penC then forms 3-geranylgeranylindole (3-GGI). Epoxidation by the FAD-dependent monooxygenase penM leads to a epoxidized-GGI that is substrate of the terpene cyclase penB for cyclization to yield paspaline. Paspaline is subsequently converted to 13-desoxypaxilline by the cytochrome P450 monooxygenase penP, the latter being then converted to paxilline by the cytochrome P450 monooxygenase penQ. Paxilline is converted to beta-paxitriol via C-10 ketoreduction by the short-chain dehydrogenase PC-15 which can be monoprenylated at the C-20 by the indole diterpene prenyltransferase penD. A two-step elimination (acetylation and elimination) process performed by the O-acetyltransferase PC-16 and the P.simplicissimum ptmI-ortholog not yet identified in P.crustosum, leads to the production of the prenylated form of penijanthine. The FAD-linked oxidoreductase ptmO then converts the prenylated form of penijanthine into PC-M5 which is in turn transformed into PC-M4 by the aromatic dimethylallyltransferase PC-22. A series of oxidation steps involving 4 cytochrome P450 monooxygenases (PC-21, PC-05, PC-23, PC-20) and a FAD-dependent monooxygenase (PC-14) are required for the transformation of PC-M4 to penitrems A and E. Synthesis of these final products is proposed to proceed via penitrems D and C (PC-21, PC-05, PC-14) and penitrems B and F (PC-21, PC-05, PC-14, PC-23). The chain is Cytochrome P450 monooxygenase PC-23 from Penicillium crustosum (Blue mold fungus).